The sequence spans 200 residues: Cytochrome c biogenesis ATP-binding export protein CcmA (200 aa).

The ABC transporter domain occupies Leu2 to Leu200. Gly34 to Thr41 lines the ATP pocket.

This sequence belongs to the ABC transporter superfamily. CcmA exporter (TC 3.A.1.107) family. In terms of assembly, the complex is composed of two ATP-binding proteins (CcmA) and two transmembrane proteins (CcmB).

It localises to the cell inner membrane. It carries out the reaction heme b(in) + ATP + H2O = heme b(out) + ADP + phosphate + H(+). Its function is as follows. Part of the ABC transporter complex CcmAB involved in the biogenesis of c-type cytochromes; once thought to export heme, this seems not to be the case, but its exact role is uncertain. Responsible for energy coupling to the transport system. The protein is Cytochrome c biogenesis ATP-binding export protein CcmA of Legionella pneumophila.